The following is a 153-amino-acid chain: Nucleoside diphosphate kinase (153 aa).

Residues Lys-11, Phe-59, Arg-87, Thr-93, Arg-104, and Asn-114 each contribute to the ATP site. The Pros-phosphohistidine intermediate role is filled by His-117.

This sequence belongs to the NDK family. Mg(2+) serves as cofactor.

The catalysed reaction is a 2'-deoxyribonucleoside 5'-diphosphate + ATP = a 2'-deoxyribonucleoside 5'-triphosphate + ADP. The enzyme catalyses a ribonucleoside 5'-diphosphate + ATP = a ribonucleoside 5'-triphosphate + ADP. Major role in the synthesis of nucleoside triphosphates other than ATP. The ATP gamma phosphate is transferred to the NDP beta phosphate via a ping-pong mechanism, using a phosphorylated active-site intermediate. This chain is Nucleoside diphosphate kinase (swoH), found in Emericella nidulans (strain FGSC A4 / ATCC 38163 / CBS 112.46 / NRRL 194 / M139) (Aspergillus nidulans).